Consider the following 1520-residue polypeptide: Glutamate synthase [NADPH] large chain (1520 aa).

Cys22 functions as the For GATase activity in the catalytic mechanism. A Glutamine amidotransferase type-2 domain is found at 22 to 415 (CGIGLYAHLK…PGKMLLIDLE (394 aa)). The interval 890-913 (GGKSNSGEGGEDPKRFVPDENGDD) is disordered. Basic and acidic residues predominate over residues 900–913 (EDPKRFVPDENGDD). Residue 1060-1112 (LAEAHQTLMLNGLRDRVVLETDGKLMTGRDVVMAALLGAEEFGFATAPLVVLG) coordinates FMN. The [3Fe-4S] cluster site is built by Cys1113, Cys1119, and Cys1124.

The protein belongs to the glutamate synthase family. As to quaternary structure, aggregate of 4 catalytic active heterodimers, consisting of a large and a small subunit. The cofactor is [3Fe-4S] cluster. Requires FAD as cofactor. FMN serves as cofactor.

The catalysed reaction is 2 L-glutamate + NADP(+) = L-glutamine + 2-oxoglutarate + NADPH + H(+). It functions in the pathway amino-acid biosynthesis; L-glutamate biosynthesis via GLT pathway; L-glutamate from 2-oxoglutarate and L-glutamine (NADP(+) route): step 1/1. Its pathway is energy metabolism; nitrogen metabolism. The protein is Glutamate synthase [NADPH] large chain (gltA) of Bacillus subtilis (strain 168).